A 201-amino-acid chain; its full sequence is Single-stranded DNA-binding protein, mitochondrial (201 aa).

The SSB domain maps to valine 71 to tyrosine 184.

Its subcellular location is the mitochondrion. Binds to ss-DNA. The chain is Single-stranded DNA-binding protein, mitochondrial from Arabidopsis thaliana (Mouse-ear cress).